The following is a 421-amino-acid chain: MGEKKPEPLDFVKDFQEYLTQQTHHVNMISGSVSGDKEAETLQGAGTEGDQNGLDHPSVEVSLDENSGMLVDGFERTFDGKLKCRYCNYASKGTARLIEHIRIHTGEKPHRCHLCPFASAYERHLEAHMRSHTGEKPYKCELCSFRCSDRSNLSHHRRRKHKMVPIKGTRSSLSSKKMWGVLQKKTSNLGYSRRALINLSPPSMVVHKPDYLNDFTHEIPNIQTEAYESMTKSSQTSGLPRDPQDLMVDNPLNQLSTLAGQLSSLPPENQNERGCSPDVVTCQDEKPFMMQQPATPAVVSSVSASIAQSSSPTSPDPRPAHNQRNYSPVAGPSSDRSAHTSTPSISNSQPSTPAPTLPVQDPQLLHHCQHCDMYFADNILYTIHMGCHGFENPFQCNICGCKCKNKYDFACHFARGQHSQH.

The tract at residues 35-55 (GDKEAETLQGAGTEGDQNGLD) is disordered. C2H2-type zinc fingers lie at residues 82-104 (LKCR…IRIH), 110-132 (HRCH…MRSH), and 138-161 (YKCE…RRKH). Residues 229–238 (SMTKSSQTSG) are compositionally biased toward polar residues. Disordered regions lie at residues 229 to 249 (SMTK…LMVD) and 292 to 358 (QPAT…PTLP). The span at 292–313 (QPATPAVVSSVSASIAQSSSPT) shows a compositional bias: low complexity. Polar residues predominate over residues 339-351 (HTSTPSISNSQPS). 2 consecutive C2H2-type zinc fingers follow at residues 366–388 (HHCQ…MGCH) and 394–418 (FQCN…RGQH).

The protein belongs to the Ikaros C2H2-type zinc-finger protein family. Probably self-associates.

It localises to the nucleus. Its function is as follows. Transcriptional repressor that binds the core 5'GNNTGTNG-3' DNA consensus sequence. In Gallus gallus (Chicken), this protein is Zinc finger protein Pegasus (IKZF5).